Consider the following 404-residue polypeptide: Deoxyguanosinetriphosphate triphosphohydrolase-like protein (404 aa).

Residues 1 to 33 (MSVGMAAPRAAFSCDPDRSRGRQFAEPPSSNRS) are disordered. Residues 69-217 (RLTHSLEVAQ…AALADDIAYD (149 aa)) form the HD domain.

It belongs to the dGTPase family. Type 2 subfamily.

This chain is Deoxyguanosinetriphosphate triphosphohydrolase-like protein, found in Rhodopseudomonas palustris (strain HaA2).